Here is a 279-residue protein sequence, read N- to C-terminus: Ultraviolet N-glycosylase/AP lyase (279 aa).

One can recognise a HhH domain in the interval 123-142; that stretch reads LEDLVALPGVGRKTAFVVLG. [4Fe-4S] cluster contacts are provided by C203, C210, C213, and C219. The disordered stretch occupies residues 256–279; that stretch reads TAGAAGPRPRAGGXAPGLPAQPFR.

The protein belongs to the Nth/MutY family. [4Fe-4S] cluster serves as cofactor.

DNA repair enzyme that has both DNA N-glycosylase activity and AP-lyase activity. Initiates repair at cis-syn pyrimidine dimers. Proceeds via an imino enzyme:DNA intermediate. This chain is Ultraviolet N-glycosylase/AP lyase (pdg), found in Micrococcus luteus (strain ATCC 4698 / DSM 20030 / JCM 1464 / CCM 169 / CCUG 5858 / IAM 1056 / NBRC 3333 / NCIMB 9278 / NCTC 2665 / VKM Ac-2230) (Micrococcus lysodeikticus).